The following is a 407-amino-acid chain: Peptidase T (407 aa).

His81 provides a ligand contact to Zn(2+). Asp83 is a catalytic residue. Asp142 is a binding site for Zn(2+). Glu176 (proton acceptor) is an active-site residue. Glu177, Asp199, and His381 together coordinate Zn(2+).

This sequence belongs to the peptidase M20B family. Requires Zn(2+) as cofactor.

The protein resides in the cytoplasm. The catalysed reaction is Release of the N-terminal residue from a tripeptide.. Functionally, cleaves the N-terminal amino acid of tripeptides. This Streptococcus pneumoniae (strain Hungary19A-6) protein is Peptidase T.